Reading from the N-terminus, the 476-residue chain is Zinc metalloproteinase/disintegrin (476 aa).

A signal peptide spans 1 to 20 (MIQVLLVIICLADFPYQGTS). A propeptide spanning residues 21–184 (IILESGNVND…KSDEPIKASQ (164 aa)) is cleaved from the precursor. At Q185 the chain carries Pyrrolidone carboxylic acid. A Peptidase M12B domain is found at 191 to 387 (RYIELVVVAD…RNPQCILNEP (197 aa)). Ca(2+)-binding residues include E194 and D278. Intrachain disulfides connect C302–C382, C342–C366, and C344–C349. Position 327 (H327) interacts with Zn(2+). Residue E328 is part of the active site. Residues H331 and H337 each coordinate Zn(2+). The Ca(2+) site is built by C382 and N385. The propeptide occupies 388 to 403 (LRTDTVSTPVSGNELL). One can recognise a Disintegrin domain in the interval 395-476 (TPVSGNELLE…AGCPRNGFYG (82 aa)). 6 cysteine pairs are disulfide-bonded: C409–C424, C411–C419, C418–C441, C432–C438, C437–C462, and C450–C469. A Cell attachment site motif is present at residues 454-456 (KGD).

Belongs to the venom metalloproteinase (M12B) family. P-II subfamily. P-IId sub-subfamily. In terms of assembly, homodimer; disulfide-linked (disintegrin). The cofactor is Zn(2+). As to expression, expressed by the venom gland.

Its subcellular location is the secreted. Its activity is regulated as follows. The metalloproteinase is inhibited by EDTA, o-phenanthroline, and cysteine. Glutathione does not inhibit the enzymatic activity. In terms of biological role, shows weak degradation of alpha-fibrinogen, but has no activity on beta- and gamma-chains. Digests luteinizing hormone-releasing hormone (LH-RH) and oxidized insulin at X-Leu, X-Phe, and X-Val bonds as well as X-His bond. Does not show fibrinogen-clotting activity. Does not show hemorrhagic activity. Inhibits ADP-induced platelet aggregation. The protein is Zinc metalloproteinase/disintegrin of Gloydius brevicauda (Korean slamosa snake).